Reading from the N-terminus, the 346-residue chain is D-alanine--D-alanine ligase (346 aa).

Residues 133–324 (KLYAQSVGVK…IVDNLAKNIE (192 aa)) form the ATP-grasp domain. 159-211 (LSFPCILKPARLGSSIGISIVKDESELKYAKDVAFEFDEDVVVEQFVSNIKEY) lines the ATP pocket. Residues D284, E296, and N298 each coordinate Mg(2+).

It belongs to the D-alanine--D-alanine ligase family. The cofactor is Mg(2+). It depends on Mn(2+) as a cofactor.

It is found in the cytoplasm. It carries out the reaction 2 D-alanine + ATP = D-alanyl-D-alanine + ADP + phosphate + H(+). It functions in the pathway cell wall biogenesis; peptidoglycan biosynthesis. Functionally, cell wall formation. The chain is D-alanine--D-alanine ligase from Campylobacter lari (strain RM2100 / D67 / ATCC BAA-1060).